The sequence spans 168 residues: MTMREEIEAAAARYPDRRSAIMPALMIAQKEHGHLPGPVLEEVAQILGVERVWVYELATFYTLFHTEPIGRFHLQLCDNVSCMLCGSEALLTHLETTLGIRKGETTPDGAFTLSTVECLGACEMAPVMQVGDDYHGNLDAARLDALLESFRAAERVTSVERAAAAPGE.

Residues cysteine 77, cysteine 82, cysteine 118, and cysteine 122 each contribute to the [2Fe-2S] cluster site.

The protein belongs to the complex I 24 kDa subunit family. [2Fe-2S] cluster serves as cofactor.

It carries out the reaction a quinone + NADH + 5 H(+)(in) = a quinol + NAD(+) + 4 H(+)(out). Its function is as follows. NDH-1 shuttles electrons from NADH, via FMN and iron-sulfur (Fe-S) centers, to quinones in the respiratory chain. The immediate electron acceptor for the enzyme in this species is believed to be ubiquinone. Couples the redox reaction to proton translocation (for every two electrons transferred, four hydrogen ions are translocated across the cytoplasmic membrane), and thus conserves the redox energy in a proton gradient. This chain is NADH-quinone oxidoreductase subunit E 2 (nuoE2), found in Rhizobium meliloti (strain 1021) (Ensifer meliloti).